A 1480-amino-acid polypeptide reads, in one-letter code: Cystic fibrosis transmembrane conductance regulator (1480 aa).

Residues 1–77 (MQRSPLEKAS…KLINALRRCF (77 aa)) are Cytoplasmic-facing. Residues 78 to 98 (FWRFMFYGIFLYLGEVTKAVQ) form a helical membrane-spanning segment. The region spanning 81 to 365 (FMFYGIFLYL…WAVQTWYDSL (285 aa)) is the ABC transmembrane type-1 1 domain. The Extracellular portion of the chain corresponds to 99–122 (PLLLGRIIASYDPDNKEERSIAIY). Residues 123 to 146 (LGIGLCLLFIVRTLLLHPAIFGLH) traverse the membrane as a helical segment. Residues 147 to 195 (HIGMQMRIAMFSLIYKKTLKLSSRVLDKISIGQLVSLLSNNLNKFDEGL) are Cytoplasmic-facing. Residues 196 to 216 (ALAHFVWIAPLQVALLMGLIW) traverse the membrane as a helical segment. The Extracellular portion of the chain corresponds to 217–222 (ELLQAS). Residues 223 to 243 (AFCGLGFLIVLALFQAGLGRM) form a helical membrane-spanning segment. Residues 244-298 (MMKYRDQRAGKISERLVITSEMIENIQSVKAYCWEEAMEKMIENLRQTELKLTRK) lie on the Cytoplasmic side of the membrane. A helical membrane pass occupies residues 299–319 (AAYVRYFNSSAFFFSGFFVVF). The Extracellular segment spans residues 320-339 (LSVLPYALIKGIILRKIFTT). Residues 340-358 (ISFCIVLRMAVTRQFPWAV) traverse the membrane as a helical segment. Residues 359–858 (QTWYDSLGAI…YLRYITVHKS (500 aa)) lie on the Cytoplasmic side of the membrane. ATP is bound by residues W401, S434, 458-465 (GSTGAGKT), and Q493. In terms of domain architecture, ABC transporter 1 spans 423–646 (NGDDSLFFSN…QPDFSSKLMG (224 aa)). C524 carries S-palmitoyl cysteine lipidation. A Phosphoserine modification is found at S549. Residues 654–831 (SAERRNSILT…EEINEEDLKE (178 aa)) form a disordered R region region. Phosphoserine; by PKA occurs at positions 660 and 670. S686 carries the phosphoserine; by PKC modification. A Glycyl lysine isopeptide (Lys-Gly) (interchain with G-Cter in ubiquitin) cross-link involves residue K688. 2 positions are modified to phosphoserine; by PKA: S700 and S712. Residue T717 is modified to Phosphothreonine. Residues S737, S753, and S768 each carry the phosphoserine; by PKA modification. S790 is subject to Phosphoserine; by PKC. A phosphoserine; by PKA mark is found at S795 and S813. Residues 859–879 (LIFVLIWCLVIFLAEVAASLV) traverse the membrane as a helical segment. The region spanning 859-1155 (LIFVLIWCLV…AVNSSIDVDS (297 aa)) is the ABC transmembrane type-1 2 domain. Over 880–918 (VLWLLGNTPLQDKGNSTHSRNNSYAVIITSTSSYYVFYI) the chain is Extracellular. 2 N-linked (GlcNAc...) asparagine glycosylation sites follow: N894 and N900. The discontinuously helical transmembrane segment at 919-939 (YVGVADTLLAMGFFRGLPLVH) threads the bilayer. Residues 940 to 990 (TLITVSKILHHKMLHSVLQAPMSTLNTLKAGGILNRFSKDIAILDDLLPLT) are Cytoplasmic-facing. Residues 991 to 1011 (IFDFIQLLLIVIGAIAVVAVL) traverse the membrane as a helical segment. Residues 1012–1013 (QP) lie on the Extracellular side of the membrane. The helical transmembrane segment at 1014-1034 (YIFVATVPVIVAFIMLRAYFL) threads the bilayer. At 1035–1095 (QTSQQLKQLE…TANWFLYLST (61 aa)) the chain is on the cytoplasmic side. Residues 1096-1116 (LRWFQMRIEMIFVIFFIAVTF) form a helical membrane-spanning segment. Residues 1117-1130 (ISILTTGEGEGRVG) lie on the Extracellular side of the membrane. Residues 1131-1151 (IILTLAMNIMSTLQWAVNSSI) form a helical membrane-spanning segment. The Cytoplasmic portion of the chain corresponds to 1152–1480 (DVDSLMRSVS…TEEEVQDTRL (329 aa)). Residues 1210–1443 (MTVKDLTAKY…RSLFRQAISP (234 aa)) form the ABC transporter 2 domain. Residues Y1219 and 1244 to 1251 (GRTGSGKS) contribute to the ATP site. The tract at residues 1386-1480 (RTLKQAFADC…TEEEVQDTRL (95 aa)) is interaction with GORASP2. Residue C1395 is the site of S-palmitoyl cysteine attachment. Phosphoserine is present on residues S1444 and S1456. Residues 1452-1480 (HRNSSKCKSKPQIAALKEETEEEVQDTRL) form a disordered region. Acidic residues predominate over residues 1470–1480 (ETEEEVQDTRL). The short motif at 1478–1480 (TRL) is the PDZ-binding element.

Belongs to the ABC transporter superfamily. ABCC family. CFTR transporter (TC 3.A.1.202) subfamily. As to quaternary structure, monomer; does not require oligomerization for channel activity. May form oligomers in the membrane. Interacts with SLC26A3, SLC26A6 and SHANK2. Interacts with NHERF1 and MYO6. Interacts (via C-terminus) with GOPC (via PDZ domain); this promotes CFTR internalization and thereby decreases channel activity. Interacts with SLC4A7 through NHERF1. Found in a complex with MYO5B and RAB11A. Interacts with ANO1. Interacts with SLC26A8. Interacts with AHCYL1; the interaction increases CFTR activity. Interacts with CSE1L. The core-glycosylated form interacts with GORASP2 (via PDZ GRASP-type 1 domain) in respone to ER stress. Interacts with MARCHF2; the interaction leads to CFTR ubiqtuitination and degradation. Interacts with ADGRG2. N-glycosylated. In terms of processing, phosphorylated; cAMP treatment promotes phosphorylation and activates the channel. Dephosphorylation decreases the ATPase activity (in vitro). Phosphorylation at PKA sites activates the channel. Phosphorylation at PKC sites enhances the response to phosphorylation by PKA. Phosphorylated by AMPK; this inhibits channel activity. Post-translationally, ubiquitinated, leading to its degradation in the lysosome. Deubiquitination by USP10 in early endosomes enhances its endocytic recycling to the cell membrane. Ubiquitinated by RNF185 during ER stress. Ubiquitinated by MARCHF2. As to expression, expressed in the respiratory airway, including bronchial epithelium, and in the female reproductive tract, including oviduct (at protein level). Detected in pancreatic intercalated ducts in the exocrine tissue, on epithelial cells in intralobular striated ducts in sublingual salivary glands, on apical membranes of crypt cells throughout the small and large intestine, and on the reabsorptive duct in eccrine sweat glands. Detected on the equatorial segment of the sperm head (at protein level). Detected in nasal and bronchial superficial epithelium. Expressed by the central cells on the sebaceous glands, dermal adipocytes and, at lower levels, by epithelial cells.

Its subcellular location is the apical cell membrane. The protein localises to the early endosome membrane. The protein resides in the cell membrane. It is found in the recycling endosome membrane. It localises to the endoplasmic reticulum membrane. Its subcellular location is the nucleus. The enzyme catalyses ATP + H2O + closed Cl(-) channel = ADP + phosphate + open Cl(-) channel.. The catalysed reaction is chloride(in) = chloride(out). It catalyses the reaction hydrogencarbonate(in) = hydrogencarbonate(out). It carries out the reaction ATP + H2O = ADP + phosphate + H(+). Its function is as follows. Epithelial ion channel that plays an important role in the regulation of epithelial ion and water transport and fluid homeostasis. Mediates the transport of chloride ions across the cell membrane. Possesses an intrinsic ATPase activity and utilizes ATP to gate its channel; the passive flow of anions through the channel is gated by cycles of ATP binding and hydrolysis by the ATP-binding domains. The ion channel is also permeable to HCO(3)(-); selectivity depends on the extracellular chloride concentration. In vitro, mediates ATP-dependent glutathione flux. Exerts its function also by modulating the activity of other ion channels and transporters. Plays an important role in airway fluid homeostasis. Contributes to the regulation of the pH and the ion content of the airway surface fluid layer and thereby plays an important role in defense against pathogens. Modulates the activity of the epithelial sodium channel (ENaC) complex, in part by regulating the cell surface expression of the ENaC complex. Inhibits the activity of the ENaC channel containing subunits SCNN1A, SCNN1B and SCNN1G. Inhibits the activity of the ENaC channel containing subunits SCNN1D, SCNN1B and SCNN1G, but not of the ENaC channel containing subunits SCNN1A, SCNN1B and SCNN1G. May regulate bicarbonate secretion and salvage in epithelial cells by regulating the transporter SLC4A7. Can inhibit the chloride channel activity of ANO1. Plays a role in the chloride and bicarbonate homeostasis during sperm epididymal maturation and capacitation. This Homo sapiens (Human) protein is Cystic fibrosis transmembrane conductance regulator.